A 413-amino-acid chain; its full sequence is Short-chain specific acyl-CoA dehydrogenase, mitochondrial (413 aa).

The N-terminal 24 residues, 1-24 (MAAALLARACGPVRGALWPRDCRR), are a transit peptide targeting the mitochondrion. T27 is modified (phosphothreonine). K51 is modified (N6-acetyllysine; alternate). Position 51 is an N6-succinyllysine; alternate (K51). Residue K72 is modified to N6-acetyllysine. K129 is modified (N6-acetyllysine; alternate). K129 carries the N6-succinyllysine; alternate modification. Residues 152-161 (FALSEPGNGS) and 185-187 (WIT) contribute to the FAD site. S161 contacts substrate. K208 is subject to N6-acetyllysine. At K262 the chain carries N6-acetyllysine; alternate. At K262 the chain carries N6-succinyllysine; alternate. 269–272 (DMGR) is a binding site for substrate. Position 297 (R297) interacts with FAD. K306 carries the N6-acetyllysine; alternate modification. At K306 the chain carries N6-succinyllysine; alternate. FAD is bound by residues Q308 and 366 to 370 (QILGG). The Proton acceptor role is filled by E393. Substrate is bound at residue G394. FAD is bound at residue 395 to 397 (TSE).

Belongs to the acyl-CoA dehydrogenase family. In terms of assembly, homotetramer. Requires FAD as cofactor.

Its subcellular location is the mitochondrion matrix. The enzyme catalyses a short-chain 2,3-saturated fatty acyl-CoA + oxidized [electron-transfer flavoprotein] + H(+) = a short-chain (2E)-enoyl-CoA + reduced [electron-transfer flavoprotein]. It carries out the reaction butanoyl-CoA + oxidized [electron-transfer flavoprotein] + H(+) = (2E)-butenoyl-CoA + reduced [electron-transfer flavoprotein]. The catalysed reaction is pentanoyl-CoA + oxidized [electron-transfer flavoprotein] + H(+) = (2E)-pentenoyl-CoA + reduced [electron-transfer flavoprotein]. It catalyses the reaction hexanoyl-CoA + oxidized [electron-transfer flavoprotein] + H(+) = (2E)-hexenoyl-CoA + reduced [electron-transfer flavoprotein]. It functions in the pathway lipid metabolism; mitochondrial fatty acid beta-oxidation. In terms of biological role, short-chain specific acyl-CoA dehydrogenase is one of the acyl-CoA dehydrogenases that catalyze the first step of mitochondrial fatty acid beta-oxidation, an aerobic process breaking down fatty acids into acetyl-CoA and allowing the production of energy from fats. The first step of fatty acid beta-oxidation consists in the removal of one hydrogen from C-2 and C-3 of the straight-chain fatty acyl-CoA thioester, resulting in the formation of trans-2-enoyl-CoA. Among the different mitochondrial acyl-CoA dehydrogenases, short-chain specific acyl-CoA dehydrogenase acts specifically on acyl-CoAs with saturated 4 to 6 carbons long primary chains. In Sus scrofa (Pig), this protein is Short-chain specific acyl-CoA dehydrogenase, mitochondrial (ACADS).